The chain runs to 189 residues: uncharacterized protein (189 aa).

This is an uncharacterized protein from Aquifex aeolicus (strain VF5).